Reading from the N-terminus, the 247-residue chain is Probable 2-phosphosulfolactate phosphatase (247 aa).

This sequence belongs to the ComB family. Mg(2+) serves as cofactor.

It carries out the reaction (2R)-O-phospho-3-sulfolactate + H2O = (2R)-3-sulfolactate + phosphate. This chain is Probable 2-phosphosulfolactate phosphatase, found in Clostridium perfringens (strain SM101 / Type A).